The primary structure comprises 516 residues: L-amino-acid oxidase (516 aa).

A signal peptide spans 1 to 18 (MNVFFMFSLLFLAALGSC). C28 and C189 are disulfide-bonded. FAD contacts are provided by residues 61–62 (MA), 81–82 (EA), R89, and 103–106 (GPMR). R106 and H239 together coordinate substrate. V279 contributes to the FAD binding site. A disulfide bridge connects residues C349 and C430. N379 carries an N-linked (GlcNAc...) asparagine glycan. Y390 contacts substrate. Residues E475 and 482–487 (GWIDST) contribute to the FAD site. 482 to 483 (GW) provides a ligand contact to substrate.

This sequence belongs to the flavin monoamine oxidase family. FIG1 subfamily. As to quaternary structure, homodimer; non-covalently linked. It depends on FAD as a cofactor. Expressed by the venom gland.

It localises to the secreted. It catalyses the reaction an L-alpha-amino acid + O2 + H2O = a 2-oxocarboxylate + H2O2 + NH4(+). In terms of biological role, catalyzes an oxidative deamination of predominantly hydrophobic and aromatic L-amino acids, thus producing hydrogen peroxide that may contribute to the diverse toxic effects of this enzyme. Exhibits diverse biological activities, such as hemolysis, edema, hemorrhage, apoptosis, antibacterial and antiparasitic activities, as well as regulation of platelet aggregation. Effects of snake L-amino oxidases on platelets are controversial, since they either induce aggregation or inhibit agonist-induced aggregation. These different effects are probably due to different experimental conditions. This is L-amino-acid oxidase from Crotalus adamanteus (Eastern diamondback rattlesnake).